Reading from the N-terminus, the 1404-residue chain is DNA-directed RNA polymerase subunit beta' (1404 aa).

Residues cysteine 70, cysteine 72, cysteine 85, and cysteine 88 each contribute to the Zn(2+) site. Mg(2+) is bound by residues aspartate 460, aspartate 462, and aspartate 464. The Zn(2+) site is built by cysteine 814, cysteine 888, cysteine 895, and cysteine 898.

The protein belongs to the RNA polymerase beta' chain family. The RNAP catalytic core consists of 2 alpha, 1 beta, 1 beta' and 1 omega subunit. When a sigma factor is associated with the core the holoenzyme is formed, which can initiate transcription. The cofactor is Mg(2+). It depends on Zn(2+) as a cofactor.

It catalyses the reaction RNA(n) + a ribonucleoside 5'-triphosphate = RNA(n+1) + diphosphate. DNA-dependent RNA polymerase catalyzes the transcription of DNA into RNA using the four ribonucleoside triphosphates as substrates. The sequence is that of DNA-directed RNA polymerase subunit beta' from Shewanella halifaxensis (strain HAW-EB4).